Consider the following 622-residue polypeptide: Chaperone protein HscA homolog (622 aa).

Belongs to the heat shock protein 70 family.

In terms of biological role, chaperone involved in the maturation of iron-sulfur cluster-containing proteins. Has a low intrinsic ATPase activity which is markedly stimulated by HscB. In Acidovorax sp. (strain JS42), this protein is Chaperone protein HscA homolog.